Consider the following 99-residue polypeptide: Indole-3-acetic acid-induced protein ARG2 (99 aa).

The segment at 40 to 62 is disordered; sequence RGGASIGGNMVPKSGEEKVRGGE. The span at 53 to 62 shows a compositional bias: basic and acidic residues; sequence SGEEKVRGGE.

The sequence is that of Indole-3-acetic acid-induced protein ARG2 (ARG2) from Vigna radiata var. radiata (Mung bean).